The primary structure comprises 719 residues: DNA ligase (719 aa).

NAD(+)-binding positions include 42 to 46 (DAAYD), 92 to 93 (SL), and Glu126. Catalysis depends on Lys128, which acts as the N6-AMP-lysine intermediate. 4 residues coordinate NAD(+): Arg149, Glu185, Lys301, and Lys325. Cys430, Cys433, Cys448, and Cys454 together coordinate Zn(2+). Positions 640–719 (ATGSPVEGKT…DDWFKLVGED (80 aa)) constitute a BRCT domain.

Belongs to the NAD-dependent DNA ligase family. LigA subfamily. The cofactor is Mg(2+). Requires Mn(2+) as cofactor.

It carries out the reaction NAD(+) + (deoxyribonucleotide)n-3'-hydroxyl + 5'-phospho-(deoxyribonucleotide)m = (deoxyribonucleotide)n+m + AMP + beta-nicotinamide D-nucleotide.. DNA ligase that catalyzes the formation of phosphodiester linkages between 5'-phosphoryl and 3'-hydroxyl groups in double-stranded DNA using NAD as a coenzyme and as the energy source for the reaction. It is essential for DNA replication and repair of damaged DNA. This chain is DNA ligase, found in Brucella ovis (strain ATCC 25840 / 63/290 / NCTC 10512).